The chain runs to 1295 residues: Phosphoribosylformylglycinamidine synthase (1295 aa).

Residues 305–327 (WPGAATGSGGEIRDEGATGRGAK) form a disordered region. ATP-binding positions include 307 to 318 (GAATGSGGEIRD), 386 to 388 (TGY), and A678. Mg(2+) is bound by residues D679, E718, N722, and D884. S886 serves as a coordination point for ATP. Residues 1042–1295 (VAVLREQGVN…IFRNARKQLG (254 aa)) form the Glutamine amidotransferase type-1 domain. The active-site Nucleophile is the C1135. Catalysis depends on residues H1260 and E1262.

The protein in the N-terminal section; belongs to the FGAMS family. Monomer.

Its subcellular location is the cytoplasm. The catalysed reaction is N(2)-formyl-N(1)-(5-phospho-beta-D-ribosyl)glycinamide + L-glutamine + ATP + H2O = 2-formamido-N(1)-(5-O-phospho-beta-D-ribosyl)acetamidine + L-glutamate + ADP + phosphate + H(+). It functions in the pathway purine metabolism; IMP biosynthesis via de novo pathway; 5-amino-1-(5-phospho-D-ribosyl)imidazole from N(2)-formyl-N(1)-(5-phospho-D-ribosyl)glycinamide: step 1/2. Its function is as follows. Phosphoribosylformylglycinamidine synthase involved in the purines biosynthetic pathway. Catalyzes the ATP-dependent conversion of formylglycinamide ribonucleotide (FGAR) and glutamine to yield formylglycinamidine ribonucleotide (FGAM) and glutamate. The sequence is that of Phosphoribosylformylglycinamidine synthase from Salmonella typhi.